The sequence spans 672 residues: uncharacterized protein (672 aa).

The N-terminal stretch at 1–24 (MKTLKTLKIFIIICIASVSLASFA) is a signal peptide. Transmembrane regions (helical) follow at residues 226 to 246 (IIGAALILYTMFFAFNMALNK), 254 to 274 (IALFVIKFLLVAYFSIGLGPL), 410 to 430 (IILAAGLVFSVIFLSILLYFI), 436 to 456 (CMITIYVMTYISPIFIPMALF), 469 to 489 (VCISCALQPAVVAGFIALLIT), and 562 to 582 (VVSILAELLCVLVFSVIFYYF). Residues 626–672 (ASQGKPSVGDKPDVGGKRKEGEQQGGDSESGAGGGLADLASGSGGGK) are disordered. Positions 633 to 647 (VGDKPDVGGKRKEGE) are enriched in basic and acidic residues. Over residues 656-672 (GAGGGLADLASGSGGGK) the composition is skewed to gly residues.

It belongs to the TrbL/VirB6 family.

It is found in the cell membrane. This is an uncharacterized protein from Rickettsia felis (strain ATCC VR-1525 / URRWXCal2) (Rickettsia azadi).